The following is a 356-amino-acid chain: Nuclear hormone receptor family member nhr-169 (356 aa).

Positions 16-90 (DPICSVCNFS…AGMKRSLVKE (75 aa)) form a DNA-binding region, nuclear receptor. NR C4-type zinc fingers lie at residues 19–40 (CSVC…CSAC) and 56–72 (CKKD…CRAC). An NR LBD domain is found at 144 to 356 (DVSKILKTTP…KLYLHMGLPF (213 aa)).

The protein belongs to the nuclear hormone receptor family.

It localises to the nucleus. Its function is as follows. Orphan nuclear receptor. This is Nuclear hormone receptor family member nhr-169 (nhr-169) from Caenorhabditis elegans.